The chain runs to 423 residues: Hydroxymethylglutaryl-CoA synthase-like protein AKT4-1 (423 aa).

Belongs to the thiolase-like superfamily. HMG-CoA synthase family.

The protein operates within mycotoxin biosynthesis. Hydroxymethylglutaryl-CoA synthase-like protein; part of the gene clusters that mediate the biosynthesis of the host-selective toxins (HSTs) AK-toxins responsible for Japanese pear black spot disease by the Japanese pear pathotype. AK-toxins are esters of 9,10-epoxy 8-hydroxy 9-methyldecatrienoic acid (EDA). On cellular level, AK-toxins affect plasma membrane of susceptible cells and cause a sudden increase in loss of K(+) after a few minutes of toxin treatment. The acyl-CoA ligase AKT1, the hydrolase AKT2 and enoyl-CoA hydratase AKT3 are all involved in the biosynthesis of the AK-, AF- and ACT-toxin common 9,10-epoxy-8-hydroxy-9-methyl-decatrienoic acid (EDA) structural moiety. Part of the EDA biosynthesis occurs in the peroxisome since these 3 enzymes are localized in peroxisomes. The exact roles of the 3 enzymes, as well as of additional AK-toxin clusters enzymes, including AKT4, AKT6 and AKTS1, have still to be elucidated. The Cytochrome P450 monooxygenase AKT7 on the other side functions to limit production of EDA and AK-toxin, probably via the catalysis of a side reaction of EDA or its precursor. The sequence is that of Hydroxymethylglutaryl-CoA synthase-like protein AKT4-1 from Alternaria alternata (Alternaria rot fungus).